We begin with the raw amino-acid sequence, 105 residues long: Large ribosomal subunit protein eL30 (105 aa).

This sequence belongs to the eukaryotic ribosomal protein eL30 family.

The sequence is that of Large ribosomal subunit protein eL30 (RPL30) from Candida glabrata (strain ATCC 2001 / BCRC 20586 / JCM 3761 / NBRC 0622 / NRRL Y-65 / CBS 138) (Yeast).